The primary structure comprises 186 residues: Ribosome-recycling factor (186 aa).

It belongs to the RRF family.

It is found in the cytoplasm. In terms of biological role, responsible for the release of ribosomes from messenger RNA at the termination of protein biosynthesis. May increase the efficiency of translation by recycling ribosomes from one round of translation to another. The polypeptide is Ribosome-recycling factor (Chlorobium phaeobacteroides (strain DSM 266 / SMG 266 / 2430)).